The following is a 334-amino-acid chain: MGNCLYPVETLSLDKNGTQFTFDSWNYSFEDNYSYELSSDYSLTPAAPCYSCNLLDRSSLPFFMLTSVLGMLASGSILFAILRPFFHWQICPSWPILAELAVGSALFSIAVPILAPGLHSAHSTALCNLGYWVWYTSAFAQALLIGCYACLNPRLNIGQLRGFTLGLSVGLWGAAALSGLPVALASDVYNGFCTFPSSRDMEALKYTHYAICFTIFTVLPLTLLAAKGLKIALSKGPGPWVSVLWIWFIFWWPHGMVLIFDALVRSKTVLLYTCQSQKILDAMLNVTEALSMLHCVATPLLLALFCHQTTRRSLSSLSLPTRQASQMDALAGKS.

At 1–61 (MGNCLYPVET…CNLLDRSSLP (61 aa)) the chain is on the extracellular side. Asparagine 16, asparagine 26, and asparagine 32 each carry an N-linked (GlcNAc...) asparagine glycan. 2 disulfide bridges follow: cysteine 49/cysteine 274 and cysteine 127/cysteine 193. The chain crosses the membrane as a helical span at residues 62 to 82 (FFMLTSVLGMLASGSILFAIL). The Cytoplasmic portion of the chain corresponds to 83–93 (RPFFHWQICPS). A helical transmembrane segment spans residues 94-114 (WPILAELAVGSALFSIAVPIL). The Extracellular portion of the chain corresponds to 115 to 127 (APGLHSAHSTALC). A helical membrane pass occupies residues 128–151 (NLGYWVWYTSAFAQALLIGCYACL). The Cytoplasmic portion of the chain corresponds to 152 to 164 (NPRLNIGQLRGFT). A helical membrane pass occupies residues 165–185 (LGLSVGLWGAAALSGLPVALA). Topologically, residues 186–205 (SDVYNGFCTFPSSRDMEALK) are extracellular. Residues 206–226 (YTHYAICFTIFTVLPLTLLAA) form a helical membrane-spanning segment. Over 227 to 242 (KGLKIALSKGPGPWVS) the chain is Cytoplasmic. Residues 243–263 (VLWIWFIFWWPHGMVLIFDAL) form a helical membrane-spanning segment. The Extracellular segment spans residues 264–285 (VRSKTVLLYTCQSQKILDAMLN). A glycan (N-linked (GlcNAc...) asparagine) is linked at asparagine 285. A helical membrane pass occupies residues 286–306 (VTEALSMLHCVATPLLLALFC). Over 307 to 334 (HQTTRRSLSSLSLPTRQASQMDALAGKS) the chain is Cytoplasmic.

The protein belongs to the G-protein coupled receptor 1 family. Atypical chemokine receptor subfamily. In terms of tissue distribution, expressed in liver and brain.

The protein resides in the early endosome. It localises to the recycling endosome. Its subcellular location is the membrane. Atypical chemokine receptor that controls chemokine levels and localization via high-affinity chemokine binding that is uncoupled from classic ligand-driven signal transduction cascades, resulting instead in chemokine sequestration, degradation, or transcytosis. Also known as interceptor (internalizing receptor) or chemokine-scavenging receptor or chemokine decoy receptor. Has a promiscuous chemokine-binding profile, interacting with inflammatory chemokines of both the CXC and the CC subfamilies but not with homeostatic chemokines. Acts as a receptor for chemokines including CCL2, CCL5, CCL7, CCL11, CCL13, CCL14, CCL17, CXCL5, CXCL6, IL8/CXCL8, CXCL11, GRO, RANTES, MCP-1 and TARC. May regulate chemokine bioavailability and, consequently, leukocyte recruitment through two distinct mechanisms: when expressed in endothelial cells, it sustains the abluminal to luminal transcytosis of tissue-derived chemokines and their subsequent presentation to circulating leukocytes; when expressed in erythrocytes, serves as blood reservoir of cognate chemokines but also as a chemokine sink, buffering potential surges in plasma chemokine levels. Functionally, (Microbial infection) Acts as a receptor for the malaria parasite Plasmodium yoelii in mature erythrocytes but not reticulocytes. The chain is Atypical chemokine receptor 1 (Ackr1) from Mus musculus (Mouse).